The chain runs to 130 residues: Insulin-like growth factor 1 (130 aa).

The N-terminal stretch at 1–25 is a signal peptide; that stretch reads MHAVSSSHLFYLAFCLLVLTSSATA. Positions 26-54 are b; the sequence is GPETLCGAELVDALQFVCGDRGFYFNKPT. Cystine bridges form between Cys31–Cys73, Cys43–Cys86, and Cys72–Cys77. The tract at residues 55 to 66 is c; that stretch reads GYGSSSRRAPQT. The tract at residues 67–87 is a; the sequence is GIVDECCFRSCDLRRLEMYCA. The segment at 88–95 is d; the sequence is PLKPAKSA. A propeptide spans 96 to 130 (e peptide); sequence RSVRAQRHTDMPKTQKEVHLKNASRGSAGNKNYRM. Residues 97 to 130 are disordered; the sequence is SVRAQRHTDMPKTQKEVHLKNASRGSAGNKNYRM. Residues 102-115 are compositionally biased toward basic and acidic residues; the sequence is RHTDMPKTQKEVHL. Residues 119-130 are compositionally biased toward polar residues; it reads SRGSAGNKNYRM.

The protein belongs to the insulin family. Forms a ternary complex with IGFR1 and ITGAV:ITGB3. Forms a ternary complex with IGFR1 and ITGA6:ITGB4. Forms a ternary complex with IGFBP3 and ALS.

The protein localises to the secreted. In terms of biological role, the insulin-like growth factors, isolated from plasma, are structurally and functionally related to insulin but have a much higher growth-promoting activity. May be a physiological regulator of [1-14C]-2-deoxy-D-glucose (2DG) transport and glycogen synthesis in osteoblasts. Stimulates glucose transport in bone-derived osteoblastic (PyMS) cells and is effective at much lower concentrations than insulin, not only regarding glycogen and DNA synthesis but also with regard to enhancing glucose uptake. May play a role in synapse maturation. Ca(2+)-dependent exocytosis of IGF1 is required for sensory perception of smell in the olfactory bulb. Acts as a ligand for IGF1R. Binds to the alpha subunit of IGF1R, leading to the activation of the intrinsic tyrosine kinase activity which autophosphorylates tyrosine residues in the beta subunit thus initiating a cascade of down-stream signaling events leading to activation of the PI3K-AKT/PKB and the Ras-MAPK pathways. Binds to integrins ITGAV:ITGB3 and ITGA6:ITGB4. Its binding to integrins and subsequent ternary complex formation with integrins and IGFR1 are essential for IGF1 signaling. Induces the phosphorylation and activation of IGFR1, MAPK3/ERK1, MAPK1/ERK2 and AKT1. As part of the MAPK/ERK signaling pathway, acts as a negative regulator of apoptosis in cardiomyocytes via promotion of STUB1/CHIP-mediated ubiquitination and degradation of ICER-type isoforms of CREM. In Cavia porcellus (Guinea pig), this protein is Insulin-like growth factor 1.